We begin with the raw amino-acid sequence, 244 residues long: 14-3-3 protein homolog 1 (244 aa).

The protein belongs to the 14-3-3 family.

The chain is 14-3-3 protein homolog 1 from Echinococcus granulosus (Hydatid tapeworm).